A 360-amino-acid polypeptide reads, in one-letter code: Putative F-box protein At1g65770 (360 aa).

The region spanning 2–50 (ADWSTLPVDLLNMIAGRLFSNIELKRFRSICRSWRSSVPGAGKKNPFRT) is the F-box domain.

This is Putative F-box protein At1g65770 from Arabidopsis thaliana (Mouse-ear cress).